We begin with the raw amino-acid sequence, 822 residues long: Lysine-specific histone demethylase 2 (822 aa).

Residues 1 to 11 (MATPRGRTKKK) are compositionally biased toward basic residues. The disordered stretch occupies residues 1-47 (MATPRGRTKKKASFDHSPDSLPLRSSGRQAKKKATETTDEDEDGGSE). 3 positions are modified to phosphoserine: Ser13, Ser17, and Ser26. The Zn(2+) site is built by Cys53, Cys58, Cys65, Cys73, His84, His90, Cys92, Cys95, Cys142, Cys147, Cys169, and Cys185. The CW-type zinc finger occupies 133–193 (DQQLPYWVQC…HCSLPEDLRV (61 aa)). Phosphoserine is present on Ser247. The segment at 273–292 (YQPNECGKALCVRPDVMELD) is GLYR1-binding. In terms of domain architecture, SWIRM spans 275–373 (PNECGKALCV…TGVLSVGADQ (99 aa)). Position 383–439 (383–439 (KSVIIIGAGPAGLAAARQLHNFGIKVTVLEAKDRIGGRVWDDKSFKGVTVGRGAQIV)) interacts with FAD. Histone H3-binding regions lie at residues 438-467 (IVNGCINNPVALMCEQLGISMHKFGERCDL), 487-498 (FNALLDVVSEWR), and 538-572 (FHLSNLEYACGSNLHQVSARSWDHNEFFAQFAGDH). Positions 564-566 (FFA) are GLYR1-binding. Residues Val598, Glu795, and 803–805 (QTV) contribute to the FAD site. The interval 798–814 (NRHFPQTVTGAYLSGVR) is GLYR1-binding.

The protein belongs to the flavin monoamine oxidase family. As to quaternary structure, interacts with its cofactor GLYR1 at nucleosomes; this interaction stimulates H3K4me1 and H3K4me2 demethylation. In contrast to KDM1A, does not form a complex with RCOR1/CoREST. Possible accessory component of the polycomb repressive deubiquitinase (PR-DUB) complex, at least composed of BAP1, one of ASXL1, ASXL2 or (probably) ASXL3 and one of MBD5 or MBD6. The PR-DUB core associates with a number of accessory proteins, including FOXK1, FOXK2, KDM1B, HCFC1 and OGT; KDM1B specifically associates with ASXL2 PR-DUB complexes. It depends on FAD as a cofactor. The cofactor is Zn(2+).

It is found in the nucleus. Its subcellular location is the chromosome. The catalysed reaction is N(6),N(6)-dimethyl-L-lysyl(4)-[histone H3] + 2 A + 2 H2O = L-lysyl(4)-[histone H3] + 2 formaldehyde + 2 AH2. It catalyses the reaction N(6)-methyl-L-lysyl(4)-[histone H3] + A + H2O = L-lysyl(4)-[histone H3] + formaldehyde + AH2. Histone H3K4me1 and H3K4me2 demethylase activity is inhibited by DNA, this inhibition is released in complex with GLYR1. In terms of biological role, histone demethylase that demethylates 'Lys-4' of histone H3, a specific tag for epigenetic transcriptional activation, thereby acting as a corepressor. Required for de novo DNA methylation of a subset of imprinted genes during oogenesis. Acts by oxidizing the substrate by FAD to generate the corresponding imine that is subsequently hydrolyzed. Demethylates both mono- and di-methylated 'Lys-4' of histone H3. Has no effect on tri-methylated 'Lys-4', mono-, di- or tri-methylated 'Lys-9', mono-, di- or tri-methylated 'Lys-27', mono-, di- or tri-methylated 'Lys-36' of histone H3, or on mono-, di- or tri-methylated 'Lys-20' of histone H4. Alone, it is unable to demethylate H3K4me on nucleosomes and requires the presence of GLYR1 to achieve such activity, they form a multifunctional enzyme complex that modifies transcribed chromatin and facilitates Pol II transcription through nucleosomes. The polypeptide is Lysine-specific histone demethylase 2 (Homo sapiens (Human)).